The chain runs to 346 residues: 4-hydroxy-2-oxovalerate aldolase (346 aa).

Residues 8–260 form the Pyruvate carboxyltransferase domain; the sequence is VTVHDMTLRD…ETGVDVFKIQ (253 aa). 16–17 contributes to the substrate binding site; sequence RD. Asp17 serves as a coordination point for Mn(2+). His20 acts as the Proton acceptor in catalysis. Positions 170 and 199 each coordinate substrate. Mn(2+) is bound by residues His199 and His201. Residue Tyr290 coordinates substrate.

Belongs to the 4-hydroxy-2-oxovalerate aldolase family.

The catalysed reaction is (S)-4-hydroxy-2-oxopentanoate = acetaldehyde + pyruvate. This is 4-hydroxy-2-oxovalerate aldolase from Polaromonas naphthalenivorans (strain CJ2).